The chain runs to 194 residues: NADH-quinone oxidoreductase subunit B (194 aa).

[4Fe-4S] cluster-binding residues include Cys73, Cys74, Cys138, and Cys168.

Belongs to the complex I 20 kDa subunit family. NDH-1 is composed of 14 different subunits. Subunits NuoB, C, D, E, F, and G constitute the peripheral sector of the complex. The cofactor is [4Fe-4S] cluster.

The protein localises to the cell inner membrane. It catalyses the reaction a quinone + NADH + 5 H(+)(in) = a quinol + NAD(+) + 4 H(+)(out). Its function is as follows. NDH-1 shuttles electrons from NADH, via FMN and iron-sulfur (Fe-S) centers, to quinones in the respiratory chain. The immediate electron acceptor for the enzyme in this species is believed to be ubiquinone. Couples the redox reaction to proton translocation (for every two electrons transferred, four hydrogen ions are translocated across the cytoplasmic membrane), and thus conserves the redox energy in a proton gradient. The polypeptide is NADH-quinone oxidoreductase subunit B (Rhizobium leguminosarum bv. trifolii (strain WSM2304)).